Here is a 265-residue protein sequence, read N- to C-terminus: Aliphatic sulfonates import ATP-binding protein SsuB 1 (265 aa).

In terms of domain architecture, ABC transporter spans F31–L255. Position 63-70 (G63–S70) interacts with ATP.

This sequence belongs to the ABC transporter superfamily. Aliphatic sulfonates importer (TC 3.A.1.17.2) family. In terms of assembly, the complex is composed of two ATP-binding proteins (SsuB), two transmembrane proteins (SsuC) and a solute-binding protein (SsuA).

The protein resides in the cell inner membrane. The catalysed reaction is ATP + H2O + aliphatic sulfonate-[sulfonate-binding protein]Side 1 = ADP + phosphate + aliphatic sulfonateSide 2 + [sulfonate-binding protein]Side 1.. In terms of biological role, part of the ABC transporter complex SsuABC involved in aliphatic sulfonates import. Responsible for energy coupling to the transport system. This chain is Aliphatic sulfonates import ATP-binding protein SsuB 1, found in Mesorhizobium japonicum (strain LMG 29417 / CECT 9101 / MAFF 303099) (Mesorhizobium loti (strain MAFF 303099)).